Here is a 581-residue protein sequence, read N- to C-terminus: Multicopper oxidase LPR1 (581 aa).

The N-terminal stretch at 1-28 (MESLLCRRRIKRVMVLIIALTWLRSTCG) is a signal peptide. 4 residues coordinate Cu cation: histidine 148, histidine 150, histidine 196, and histidine 198. N-linked (GlcNAc...) asparagine glycosylation is found at asparagine 254, asparagine 298, asparagine 386, and asparagine 458. The 70-residue stretch at 283–352 (PRLNVRRRKY…DVVVDFYKSP (70 aa)) folds into the Plastocyanin-like domain. Cu cation contacts are provided by histidine 464, histidine 467, and histidine 469. Asparagine 546 is a glycosylation site (N-linked (GlcNAc...) asparagine). Positions 562, 563, 564, 568, and 573 each coordinate Cu cation.

This sequence belongs to the multicopper oxidase family. The cofactor is Cu cation.

The protein resides in the endoplasmic reticulum membrane. Its function is as follows. Multicopper oxidase that may be involved in copper homeostasis and oxidative stress response, and that is necessary for root growth inhibition by low phosphate conditions. Functions together with LPR2 and PDR2 in a common pathway that adjusts root meristem activity to phosphate availability. Oxidizes the substrate 2,2'-azinobis-(3-ethylbenzthiazoline-6-sulphonate) in vitro. The sequence is that of Multicopper oxidase LPR1 (LPR1) from Arabidopsis thaliana (Mouse-ear cress).